Consider the following 567-residue polypeptide: Zinc finger protein 143 (567 aa).

7 C2H2-type zinc fingers span residues 230–254 (FRCDYEGCGKLYTTAHHLKVHERSH), 260–284 (YQCDHGGCRKAFATGYGLKSHVRTH), 290–314 (YRCSEENCTKSFKTSGDLQKHVRTH), 320–344 (FKCPFEGCGRSFTTSNIRKVHIRTH), 350–374 (YYCSEPGCGRAFASATNYKNHVRIH), 380–404 (YVCTVPGCDKRFTEYSSLYKHHVVH), and 410–433 (YNCNHCGKTYKQISTLAMHKRTAH). Polar residues predominate over residues 506–520 (SATESGPQHSHNLGG). The interval 506–525 (SATESGPQHSHNLGGSESRP) is disordered.

The protein belongs to the GLI C2H2-type zinc-finger protein family.

It is found in the nucleus. In terms of biological role, transcriptional activator. Activates the gene for selenocysteine tRNA (tRNAsec). Binds to the activator element (AE) motif of the selenocysteine tRNA gene promoter. This chain is Zinc finger protein 143 (znf143), found in Xenopus tropicalis (Western clawed frog).